We begin with the raw amino-acid sequence, 660 residues long: Glycogen debranching enzyme (660 aa).

Residue aspartate 338 is the Nucleophile of the active site. Catalysis depends on glutamate 373, which acts as the Proton donor. The segment covering asparagine 460–tryptophan 472 has biased composition (basic and acidic residues). The segment at asparagine 460–glutamate 482 is disordered.

This sequence belongs to the glycosyl hydrolase 13 family.

It catalyses the reaction Hydrolysis of (1-&gt;6)-alpha-D-glucosidic linkages to branches with degrees of polymerization of three or four glucose residues in limit dextrin.. It functions in the pathway glycan degradation; glycogen degradation. In terms of biological role, removes maltotriose and maltotetraose chains that are attached by 1,6-alpha-linkage to the limit dextrin main chain, generating a debranched limit dextrin. The sequence is that of Glycogen debranching enzyme from Cronobacter sakazakii (strain ATCC BAA-894) (Enterobacter sakazakii).